The following is a 441-amino-acid chain: GTPase Der (441 aa).

2 consecutive EngA-type G domains span residues 4-169 (PVVA…PEDI) and 178-353 (IKVA…DQAA). GTP is bound by residues 10–17 (GRPNVGKS), 57–61 (DTGGI), 120–123 (NKVD), 184–191 (GKPNAGKS), 231–235 (DTAGI), and 296–299 (NKWD). Residues 354–438 (FRISTGMLND…PIRFIHRQRE (85 aa)) enclose the KH-like domain.

The protein belongs to the TRAFAC class TrmE-Era-EngA-EngB-Septin-like GTPase superfamily. EngA (Der) GTPase family. Associates with the 50S ribosomal subunit.

GTPase that plays an essential role in the late steps of ribosome biogenesis. This chain is GTPase Der, found in Ruminiclostridium cellulolyticum (strain ATCC 35319 / DSM 5812 / JCM 6584 / H10) (Clostridium cellulolyticum).